Consider the following 218-residue polypeptide: Cytochrome b6 (218 aa).

A helical transmembrane segment spans residues 35-55; the sequence is IFYCLGGITLVCFLIQFATGF. Cysteine 38 provides a ligand contact to heme c. 2 residues coordinate heme b: histidine 89 and histidine 103. 3 helical membrane passes run 93–113, 119–139, and 189–209; these read ASMM…TGGF, LTWV…VTGY, and LHTF…FLMI. Residues histidine 190 and histidine 205 each coordinate heme b.

The protein belongs to the cytochrome b family. PetB subfamily. As to quaternary structure, the 4 large subunits of the cytochrome b6-f complex are cytochrome b6, subunit IV (17 kDa polypeptide, PetD), cytochrome f and the Rieske protein, while the 4 small subunits are PetG, PetL, PetM and PetN. The complex functions as a dimer. Heme b is required as a cofactor. The cofactor is heme c.

It localises to the cellular thylakoid membrane. Component of the cytochrome b6-f complex, which mediates electron transfer between photosystem II (PSII) and photosystem I (PSI), cyclic electron flow around PSI, and state transitions. The sequence is that of Cytochrome b6 from Prochlorococcus marinus (strain MIT 9215).